Consider the following 333-residue polypeptide: MYTYDSSGETLKIAIAWKIILKKPKGKNIKDYIEALRKGIEDQEHCEKYASTLLEPRPKTKKDVVLKNSNVTECVALKAKPFSKKIEDMDIFLLTNVHENLQEKRQTSGSLAHLDIEYTFNGLFRFLKCTADIKLKQTKVYEGADFLRIKTLFEEIFMFLKRDCKSPLVLTRLVELGDYVLDLIIITQSIMQNNANNGTGVISRAKFLEFYVFLEQLIFNKLSFASVEQLEKLLDQIVKRMKICFTYCKNDNPSIRLLYSECFFSYAEIYFPCLHSFDAQLSSAASKCVQILRDIITNEELQTDKQELSKSAYSAPSILLIGLKDMLFPEDIS.

The protein belongs to the MEI4L family. As to quaternary structure, interacts with Rec7, as part of the meiotic recombination initiation complex.

It is found in the cytoplasm. The protein resides in the nucleus. Its function is as follows. Required for correct meiotic chromosome segregation and recombination. Accessory protein required for Rec12 activity, which is involved in formation of the double-strand breaks (DSBs) that initiate meiotic recombination. In Schizosaccharomyces pombe (strain 972 / ATCC 24843) (Fission yeast), this protein is Meiotic recombination protein rec24 (rec24).